Reading from the N-terminus, the 454-residue chain is GTPase Der (454 aa).

EngA-type G domains lie at 4 to 168 (PQVA…PEKD) and 178 to 352 (MKIA…KQAQ). Residues 10-17 (GRPNVGKS), 57-61 (DTGGM), 120-123 (NKAD), 184-191 (GRRNVGKS), 231-235 (DTPGL), and 296-299 (NKWD) each bind GTP. The KH-like domain occupies 353-437 (SRVSTGELNR…PIKLYMQQRS (85 aa)).

It belongs to the TRAFAC class TrmE-Era-EngA-EngB-Septin-like GTPase superfamily. EngA (Der) GTPase family. Associates with the 50S ribosomal subunit.

Its function is as follows. GTPase that plays an essential role in the late steps of ribosome biogenesis. This chain is GTPase Der, found in Rhodopirellula baltica (strain DSM 10527 / NCIMB 13988 / SH1).